A 392-amino-acid chain; its full sequence is Bifunctional enzyme Fae/Hps (392 aa).

The tract at residues 1–161 is formaldehyde-activating enzyme; sequence MFQIGEALMG…EESNKSTHAI (161 aa). Histidine 17 serves as the catalytic Proton donor. Substrate is bound by residues aspartate 19, leucine 48, lysine 66, threonine 68, and glutamine 83. The interval 162–392 is 3-hexulose-6-phosphate synthase; the sequence is MGFKVTRLWD…IDQFRVMTDF (231 aa).

It in the N-terminal section; belongs to the formaldehyde-activating enzyme family. The protein in the C-terminal section; belongs to the HPS/KGPDC family. HPS subfamily.

The catalysed reaction is 5,6,7,8-tetrahydromethanopterin + formaldehyde = 5,10-methylenetetrahydromethanopterin + H2O. It carries out the reaction D-ribulose 5-phosphate + formaldehyde = D-arabino-hex-3-ulose 6-phosphate. Its pathway is carbohydrate biosynthesis; D-ribose 5-phosphate biosynthesis. Functionally, catalyzes the condensation of formaldehyde with tetrahydromethanopterin (H(4)MPT) to 5,10-methylenetetrahydromethanopterin. In terms of biological role, catalyzes the reversible formation of ribulose-5-phosphate and formaldehyde from 3-hexulose-6-phosphate. This Methanosarcina barkeri (strain Fusaro / DSM 804) protein is Bifunctional enzyme Fae/Hps.